A 155-amino-acid chain; its full sequence is S-ribosylhomocysteine lyase (155 aa).

Positions 57, 61, and 124 each coordinate Fe cation.

It belongs to the LuxS family. As to quaternary structure, homodimer. The cofactor is Fe cation.

The enzyme catalyses S-(5-deoxy-D-ribos-5-yl)-L-homocysteine = (S)-4,5-dihydroxypentane-2,3-dione + L-homocysteine. Its function is as follows. Involved in the synthesis of autoinducer 2 (AI-2) which is secreted by bacteria and is used to communicate both the cell density and the metabolic potential of the environment. The regulation of gene expression in response to changes in cell density is called quorum sensing. Catalyzes the transformation of S-ribosylhomocysteine (RHC) to homocysteine (HC) and 4,5-dihydroxy-2,3-pentadione (DPD). The chain is S-ribosylhomocysteine lyase from Listeria monocytogenes serotype 4b (strain CLIP80459).